The sequence spans 83 residues: Short neurotoxin II (83 aa).

An N-terminal signal peptide occupies residues 1-21 (MKTLLLTLVVVTVVCLDLGYT). 4 disulfide bridges follow: cysteine 24–cysteine 45, cysteine 38–cysteine 62, cysteine 64–cysteine 75, and cysteine 76–cysteine 81.

Belongs to the three-finger toxin family. Short-chain subfamily. Type I alpha-neurotoxin sub-subfamily. Expressed by the venom gland.

It is found in the secreted. Its function is as follows. Binds to muscle nicotinic acetylcholine receptor (nAChR) and inhibit acetylcholine from binding to the receptor, thereby impairing neuromuscular transmission. This Laticauda colubrina (Yellow-lipped sea krait) protein is Short neurotoxin II.